A 92-amino-acid chain; its full sequence is Small ribosomal subunit protein uS19c (92 aa).

The protein belongs to the universal ribosomal protein uS19 family.

The protein resides in the plastid. It is found in the cyanelle. In terms of biological role, protein S19 forms a complex with S13 that binds strongly to the 16S ribosomal RNA. The protein is Small ribosomal subunit protein uS19c (rps19) of Cyanophora paradoxa.